A 303-amino-acid chain; its full sequence is GTPase Era (303 aa).

An Era-type G domain is found at 8-176; it reads YCGFIAIVGR…ASIVRKHMPE (169 aa). Residues 16–23 form a G1 region; it reads GRPNVGKS. 16 to 23 contacts GTP; the sequence is GRPNVGKS. Residues 42 to 46 are G2; the sequence is QTTRH. The interval 63-66 is G3; the sequence is DTPG. Residues 63–67 and 125–128 each bind GTP; these read DTPGL and NKVD. The segment at 125-128 is G4; sequence NKVD. The interval 155-157 is G5; the sequence is ISA. The region spanning 207 to 284 is the KH type-2 domain; that stretch reads LGEELPYSVT…HLELWVKVKS (78 aa).

Belongs to the TRAFAC class TrmE-Era-EngA-EngB-Septin-like GTPase superfamily. Era GTPase family. As to quaternary structure, monomer.

The protein resides in the cytoplasm. It is found in the cell inner membrane. Functionally, an essential GTPase that binds both GDP and GTP, with rapid nucleotide exchange. Plays a role in 16S rRNA processing and 30S ribosomal subunit biogenesis and possibly also in cell cycle regulation and energy metabolism. This is GTPase Era from Yersinia pseudotuberculosis serotype O:1b (strain IP 31758).